Consider the following 438-residue polypeptide: ATP-dependent protease ATPase subunit HslU (438 aa).

Residues Val18, 60–65 (GVGKTE), Asp252, Glu317, and Arg389 contribute to the ATP site.

The protein belongs to the ClpX chaperone family. HslU subfamily. In terms of assembly, a double ring-shaped homohexamer of HslV is capped on each side by a ring-shaped HslU homohexamer. The assembly of the HslU/HslV complex is dependent on binding of ATP.

The protein resides in the cytoplasm. ATPase subunit of a proteasome-like degradation complex; this subunit has chaperone activity. The binding of ATP and its subsequent hydrolysis by HslU are essential for unfolding of protein substrates subsequently hydrolyzed by HslV. HslU recognizes the N-terminal part of its protein substrates and unfolds these before they are guided to HslV for hydrolysis. The protein is ATP-dependent protease ATPase subunit HslU of Saccharophagus degradans (strain 2-40 / ATCC 43961 / DSM 17024).